Consider the following 287-residue polypeptide: Aquaporin PIP1-1 (287 aa).

Helical transmembrane passes span Ile57 to Val77 and Ile92 to Ile114. The short motif at Asn115–Ala117 is the NPA 1 element. 3 consecutive transmembrane segments (helical) span residues Val134–Phe154, Gly176–Ala196, and Ile210–Ile230. Positions Asn236 to Ala238 match the NPA 2 motif. A helical transmembrane segment spans residues Ile258 to Ile278.

The protein belongs to the MIP/aquaporin (TC 1.A.8) family. PIP (TC 1.A.8.11) subfamily. May interact with PIP1-2 to form heteromers. As to expression, highly expressed in roots, shoots and developing tassels, and at lower levels in leaves.

Its subcellular location is the cell membrane. In terms of biological role, water channel required to facilitate the transport of water across cell membrane. Active as heteromers with PIP1-2, but not as homomers. The chain is Aquaporin PIP1-1 (PIP1-1) from Zea mays (Maize).